The following is a 207-amino-acid chain: Small ribosomal subunit protein uS4 (207 aa).

Residues 31–55 form a disordered region; the sequence is KCKLDSKPGQHGRTSGARTSDYGTQ. Polar residues predominate over residues 42 to 53; that stretch reads GRTSGARTSDYG. The S4 RNA-binding domain maps to 97–160; that stretch reads SRLDNVVYRM…KKQARIVEAL (64 aa).

It belongs to the universal ribosomal protein uS4 family. As to quaternary structure, part of the 30S ribosomal subunit. Contacts protein S5. The interaction surface between S4 and S5 is involved in control of translational fidelity.

In terms of biological role, one of the primary rRNA binding proteins, it binds directly to 16S rRNA where it nucleates assembly of the body of the 30S subunit. With S5 and S12 plays an important role in translational accuracy. The polypeptide is Small ribosomal subunit protein uS4 (Burkholderia lata (strain ATCC 17760 / DSM 23089 / LMG 22485 / NCIMB 9086 / R18194 / 383)).